Here is a 91-residue protein sequence, read N- to C-terminus: uncharacterized protein (91 aa).

The region spanning 1–91 (MLTFWHWKWL…YQNILRENGI (91 aa)) is the Integrase catalytic domain.

This is an uncharacterized protein from Haemophilus influenzae (strain ATCC 51907 / DSM 11121 / KW20 / Rd).